The primary structure comprises 153 residues: 4'-phosphopantetheinyl transferase B, mitochondrial (153 aa).

The protein belongs to the P-Pant transferase superfamily.

It localises to the mitochondrion. It catalyses the reaction apo-[ACP] + CoA = holo-[ACP] + adenosine 3',5'-bisphosphate + H(+). Its function is as follows. Acyl-carrier-protein synthase transfers the 4'-phosphopantetheine moiety from coenzyme A to a Ser of an acyl-carrier-protein. The 4'-phosphopantetheine (4'-PPT) portion of CoA provides the essential prosthetic group for a number of carrier proteins and multi-domain enzymes, priming them for the acceptance of acyl building blocks in fatty acid synthesis and many aspects of secondary metabolism mediated by polyketide synthases (PKSs) and non-ribosomal peptide synthetases (NRPSs). PptB is specific for the mitochondrial acyl carrier protein acpA. The chain is 4'-phosphopantetheinyl transferase B, mitochondrial from Aspergillus fumigatus (strain ATCC MYA-4609 / CBS 101355 / FGSC A1100 / Af293) (Neosartorya fumigata).